The chain runs to 1265 residues: Protein transport protein SEC31 (1265 aa).

WD repeat units lie at residues 6–46 (EIAR…ELWD), 61–105 (TVDN…KTKD), 116–156 (KHTG…EPFA), 162–202 (TPMD…EVLH), 209–252 (GGRA…APEK), 256–296 (GHKK…KLGE), and 299–339 (TTAN…PSVS). The stretch at 380-403 (SFGFGSKLVIINTDSSGKSTVKVD) is one WD 8; interaction with SEC13 repeat. The span at 457 to 480 (KESLFEDANNDEKEATSPETKKEN) shows a compositional bias: basic and acidic residues. 3 disordered regions span residues 457-485 (KESLFEDANNDEKEATSPETKKENGEDDF), 765-784 (VKSSANAKIAKPASSSGQTR), and 793-1163 (PAYA…IPEN). Residues 794-810 (AYAPPVQAPPVQAPQPP) show a composition bias toward pro residues. 5 stretches are compositionally biased toward low complexity: residues 811–824 (LVQQQQQQQQQQQP), 865–875 (TPSSLSGTTSG), 901–931 (AKTAAPRRAAAAATPPVSTPTPVSAPAFGSP), 939–951 (SQPGSVGSVSSAG), and 969–987 (SISRSTSRTTVPTSSTVPA). The span at 1004–1023 (SDASQPPSSGFASPTLNSSP) shows a compositional bias: polar residues. Composition is skewed to pro residues over residues 1062-1071 (YAPPKNPYAV) and 1083-1101 (APPPPAPKLGSAAPPPPQP).

Belongs to the WD repeat SEC31 family. The COPII coat is composed of at least 5 proteins: the SEC23/24 complex, the SEC13/31 complex, and the protein SAR1. SEC13 and SEC31 make a 2:2 tetramer that forms the edge element of the COPII outer coat. The tetramer self-assembles in multiple copies to form the complete polyhedral cage. Interacts (via WD 8) with SEC13.

Its subcellular location is the cytoplasmic vesicle. The protein resides in the COPII-coated vesicle membrane. It localises to the endoplasmic reticulum membrane. Functionally, component of the coat protein complex II (COPII) which promotes the formation of transport vesicles from the endoplasmic reticulum (ER). The coat has two main functions, the physical deformation of the endoplasmic reticulum membrane into vesicles and the selection of cargo molecules. This chain is Protein transport protein SEC31 (PGA63), found in Candida albicans (strain SC5314 / ATCC MYA-2876) (Yeast).